Reading from the N-terminus, the 176-residue chain is Interleukin-19 (176 aa).

The N-terminal stretch at 1–24 is a signal peptide; that stretch reads MKTQCASTWLLGMTLILCSVHIYS. Cystine bridges form between Cys-28/Cys-120, Cys-74/Cys-126, and Cys-75/Cys-128. Residue Asn-56 is glycosylated (N-linked (GlcNAc...) asparagine). Residues Asn-127 and Asn-134 are each glycosylated (N-linked (GlcNAc...) asparagine).

Belongs to the IL-10 family.

Its subcellular location is the secreted. Its function is as follows. Cytokine that functions as an anti-inflammatory and proangiogenic factor. Polarizes adaptive immunity to an anti-inflammatory phenotype through induction of T-helper 2 responses by both down-regulation of IFN-gamma and up-regulation of IL4 and IL5. Produced by osteocytes, stimulates granulopoiesis and neutrophil formation. Exerts its biological effect through a receptor complex consisting of a heterodimer of IL20RA and IL20RB. In turn, activates the Janus kinase (JAK) and signal transducer and activator of transcription (STAT) pathway, and importantly, STAT3. The polypeptide is Interleukin-19 (Il19) (Mus musculus (Mouse)).